The sequence spans 402 residues: Beta sliding clamp (402 aa).

The protein belongs to the beta sliding clamp family. As to quaternary structure, forms a ring-shaped head-to-tail homodimer around DNA which binds and tethers DNA polymerases and other proteins to the DNA. The DNA replisome complex has a single clamp-loading complex (3 tau and 1 each of delta, delta', psi and chi subunits) which binds 3 Pol III cores (1 core on the leading strand and 2 on the lagging strand) each with a beta sliding clamp dimer. Additional proteins in the replisome are other copies of gamma, psi and chi, Ssb, DNA helicase and RNA primase.

It localises to the cytoplasm. In terms of biological role, confers DNA tethering and processivity to DNA polymerases and other proteins. Acts as a clamp, forming a ring around DNA (a reaction catalyzed by the clamp-loading complex) which diffuses in an ATP-independent manner freely and bidirectionally along dsDNA. Initially characterized for its ability to contact the catalytic subunit of DNA polymerase III (Pol III), a complex, multichain enzyme responsible for most of the replicative synthesis in bacteria; Pol III exhibits 3'-5' exonuclease proofreading activity. The beta chain is required for initiation of replication as well as for processivity of DNA replication. This is Beta sliding clamp (dnaN) from Mycobacterium tuberculosis (strain CDC 1551 / Oshkosh).